Consider the following 260-residue polypeptide: Snake venom serine protease homolog KN4 (260 aa).

The first 18 residues, 1-18, serve as a signal peptide directing secretion; it reads MVLIRVLANLLILQLSYA. A propeptide spanning residues 19 to 24 is cleaved from the precursor; that stretch reads QKSSEL. One can recognise a Peptidase S1 domain in the interval 25–251; that stretch reads IIGGDECNIN…HLDWIQNIIA (227 aa). Intrachain disulfides connect cysteine 31/cysteine 165, cysteine 52/cysteine 68, cysteine 100/cysteine 258, cysteine 144/cysteine 212, cysteine 176/cysteine 191, and cysteine 202/cysteine 227. N-linked (GlcNAc...) asparagine glycans are attached at residues asparagine 83, asparagine 123, asparagine 124, asparagine 156, and asparagine 172. Asparagine 253 carries an N-linked (GlcNAc...) asparagine glycan.

The protein belongs to the peptidase S1 family. Snake venom subfamily. In terms of tissue distribution, expressed by the venom gland.

Its subcellular location is the secreted. Functionally, snake venom serine protease homolog that may act in the hemostasis system of the prey. The polypeptide is Snake venom serine protease homolog KN4 (Trimeresurus stejnegeri (Chinese green tree viper)).